The chain runs to 57 residues: Large ribosomal subunit protein bL32B (57 aa).

The protein belongs to the bacterial ribosomal protein bL32 family.

The polypeptide is Large ribosomal subunit protein bL32B (rpmF2) (Listeria innocua serovar 6a (strain ATCC BAA-680 / CLIP 11262)).